Here is a 65-residue protein sequence, read N- to C-terminus: MQVIEAIYEDGVLKPLKKLKLKEHSKVIIKIIDEEELEKILDSMVIEKVEGIDYKKLKEAYYESL.

It belongs to the UPF0165 family.

Possibly the antitoxin component of a type II toxin-antitoxin (TA) system. In Pyrococcus furiosus (strain ATCC 43587 / DSM 3638 / JCM 8422 / Vc1), this protein is Putative antitoxin PF2058.